Here is a 174-residue protein sequence, read N- to C-terminus: ATP synthase subunit delta (174 aa).

Belongs to the ATPase delta chain family. F-type ATPases have 2 components, F(1) - the catalytic core - and F(0) - the membrane proton channel. F(1) has five subunits: alpha(3), beta(3), gamma(1), delta(1), epsilon(1). F(0) has three main subunits: a(1), b(2) and c(10-14). The alpha and beta chains form an alternating ring which encloses part of the gamma chain. F(1) is attached to F(0) by a central stalk formed by the gamma and epsilon chains, while a peripheral stalk is formed by the delta and b chains.

Its subcellular location is the cell inner membrane. Its function is as follows. F(1)F(0) ATP synthase produces ATP from ADP in the presence of a proton or sodium gradient. F-type ATPases consist of two structural domains, F(1) containing the extramembraneous catalytic core and F(0) containing the membrane proton channel, linked together by a central stalk and a peripheral stalk. During catalysis, ATP synthesis in the catalytic domain of F(1) is coupled via a rotary mechanism of the central stalk subunits to proton translocation. Functionally, this protein is part of the stalk that links CF(0) to CF(1). It either transmits conformational changes from CF(0) to CF(1) or is implicated in proton conduction. This chain is ATP synthase subunit delta, found in Helicobacter hepaticus (strain ATCC 51449 / 3B1).